Reading from the N-terminus, the 530-residue chain is Cytochrome P450 monooxygenase sttB (530 aa).

An N-linked (GlcNAc...) asparagine glycan is attached at asparagine 5. A helical transmembrane segment spans residues leucine 24 to serine 44. Asparagine 230 carries an N-linked (GlcNAc...) asparagine glycan.

This sequence belongs to the cytochrome P450 family. Heme serves as cofactor.

It is found in the membrane. The catalysed reaction is preaspterpenacid acid I + reduced [NADPH--hemoprotein reductase] + O2 = preaspterpenacid acid II + oxidized [NADPH--hemoprotein reductase] + H2O + H(+). It functions in the pathway secondary metabolite biosynthesis; terpenoid biosynthesis. In terms of biological role, cytochrome P450 monooxygenase; part of the gene cluster that mediates the biosynthesis of aspterpenacids. Performs the C22-oxidative modification of the terpene synthase sttA product preaspterpenacid I to produce preaspterpenacid II. It has still to be determined how preaspterpenacid II is further modified to produce aspterpenacids. The sequence is that of Cytochrome P450 monooxygenase sttB from Aspergillus terreus (strain NIH 2624 / FGSC A1156).